The primary structure comprises 169 residues: Short form salivary protein D7R3 (169 aa).

Positions 1–21 (MFGKLLPCAILVWCLFSLGQA) are cleaved as a signal peptide. 3 disulfide bridges follow: C30–C62, C43–C168, and C101–C120. 2 residues coordinate noradrenaline: E31 and R46. Residue E31 coordinates serotonin. Serotonin-binding residues include H59, Y118, D135, and E138. Residues Y118, D135, and E138 each contribute to the histamine site. The noradrenaline site is built by D135 and E138.

The protein belongs to the PBP/GOBP family. As to expression, female saliva (at protein level). Female salivary gland. Low-level expression in female carcass without salivary glands. Not detected in male tissues.

The protein resides in the secreted. Functionally, modulates blood feeding of female mosquitoes on vertebrate species by binding and sequestering different mediators involved in the host response. Binds serotonin, noradrenaline, histamine and adrenaline. Inhibits histamine-, serotonin- and noradrenaline-induced smooth muscle contraction. Exhibits vasodilating activity. The sequence is that of Short form salivary protein D7R3 from Anopheles gambiae (African malaria mosquito).